The chain runs to 379 residues: Sperm microtubule associated protein 2 (379 aa).

Residues 1 to 82 (MGDSRRRSLG…EFPETLDPKE (82 aa)) form a disordered region. Composition is skewed to basic and acidic residues over residues 19 to 29 (GRSEREQDGDP) and 38 to 50 (ESRRVTDPERQDL). The segment covering 56–76 (GPEDPEEELPPEEVAGEEFPE) has biased composition (acidic residues). THEG repeat units lie at residues 118–137 (KARKRRRRRRLMELAEPKIN), 184–203 (TITVPAVSRRVEELSRPKRF), 222–241 (SSLEYRASSRLKELAAPKIR), 258–277 (AAQMAVPSSRILQLSKPKAP), 290–309 (PKPHVSDHNRLLHLARPKAQ), and 326–345 (VTKKVVASPRIISLAKPKVR). A Phosphoserine modification is found at Ser-295. The interval 344-379 (VRKGLNEGYDRRPLASMSLPPPKASPEKCDQPRPGL) is disordered. Basic and acidic residues-rich tracts occupy residues 347–356 (GLNEGYDRRP) and 368–379 (SPEKCDQPRPGL).

Interacts with CCT5. As to expression, testis specific.

The protein resides in the nucleus. Its function is as follows. May be involved (but not essential) in spermatogenesis. The protein is Sperm microtubule associated protein 2 of Homo sapiens (Human).